The primary structure comprises 193 residues: Cytidylate kinase (193 aa).

Residue 12-20 (GLAGSGTTT) participates in ATP binding.

It belongs to the cytidylate kinase family. Type 2 subfamily.

It localises to the cytoplasm. The catalysed reaction is CMP + ATP = CDP + ADP. The enzyme catalyses dCMP + ATP = dCDP + ADP. The polypeptide is Cytidylate kinase (Thermococcus kodakarensis (strain ATCC BAA-918 / JCM 12380 / KOD1) (Pyrococcus kodakaraensis (strain KOD1))).